Reading from the N-terminus, the 424-residue chain is 3-phosphoshikimate 1-carboxyvinyltransferase (424 aa).

3 residues coordinate 3-phosphoshikimate: Lys-20, Ser-21, and Arg-25. Lys-20 is a phosphoenolpyruvate binding site. Phosphoenolpyruvate contacts are provided by Gly-92 and Arg-120. 3-phosphoshikimate-binding residues include Ser-165, Gln-167, Asp-313, and Lys-340. Gln-167 serves as a coordination point for phosphoenolpyruvate. Asp-313 functions as the Proton acceptor in the catalytic mechanism. Positions 344 and 386 each coordinate phosphoenolpyruvate.

This sequence belongs to the EPSP synthase family. In terms of assembly, monomer.

Its subcellular location is the cytoplasm. The catalysed reaction is 3-phosphoshikimate + phosphoenolpyruvate = 5-O-(1-carboxyvinyl)-3-phosphoshikimate + phosphate. It participates in metabolic intermediate biosynthesis; chorismate biosynthesis; chorismate from D-erythrose 4-phosphate and phosphoenolpyruvate: step 6/7. In terms of biological role, catalyzes the transfer of the enolpyruvyl moiety of phosphoenolpyruvate (PEP) to the 5-hydroxyl of shikimate-3-phosphate (S3P) to produce enolpyruvyl shikimate-3-phosphate and inorganic phosphate. The sequence is that of 3-phosphoshikimate 1-carboxyvinyltransferase from Bacillus cytotoxicus (strain DSM 22905 / CIP 110041 / 391-98 / NVH 391-98).